Consider the following 601-residue polypeptide: MHRSDAAPASSIRIYFRLLSYVRPYVGLFAVSILGYVIFASSQPMLAGVLKYFVDGLTHPDAALVTGVPLLDGMELMHGVPLMIVLIAAWQGLGGYLGNYFLARVSLGLVHDLRQTLFDSLLRLPNTYFDQHSSGHLISRITFNVTMVTGAATDAIKIVIREGLTVVFLFAYLLWMNWRLTLVMVAILPLISLMVRNASGKFRKQSRKIQVAMGDVTHVASETIQGYRVVRSFGGEHYERERFRAASEDNTRKQLKMVKTSAVYTPTLQLVTYSAMAVVLFLVLRLRGEASVGDLVAYITAAGLLPKPIRQLSEVSSTIQRGVAGAESIFEQLDDKPEVDHGRIERERVSGRIEVRDLSFRYPGSDREVLDSVSFTVEPGQMIALVGRSGSGKSTLANLIPRFYHHDRGQILIDGVDVEDYTLKNLRRHIALVTQQVTLFNDTVANNIAYGDLAGLPRAAVEAAAEAGYAKEFIDRLPQGFDTLIGENGVTLSGGQRQRLAIARALLKNAPILILDEATSALDTESERHIQAALHRVMQARTTLVIAHRLSTIEQADVIMVMDHGRIVERGSHAELLAAGGHYARLHAMQFREEPAVAEGR.

A run of 4 helical transmembrane segments spans residues 26-46, 82-102, 167-187, and 263-283; these read VGLF…QPML, LMIV…NYFL, VFLF…MVAI, and VYTP…LFLV. In terms of domain architecture, ABC transmembrane type-1 spans 30-321; the sequence is AVSILGYVIF…LSEVSSTIQR (292 aa). An ABC transporter domain is found at 353 to 589; that stretch reads IEVRDLSFRY…GGHYARLHAM (237 aa). 387-394 contacts ATP; that stretch reads GRSGSGKS.

It belongs to the ABC transporter superfamily. Lipid exporter (TC 3.A.1.106) family. In terms of assembly, homodimer.

It is found in the cell inner membrane. The enzyme catalyses ATP + H2O + lipid A-core oligosaccharideSide 1 = ADP + phosphate + lipid A-core oligosaccharideSide 2.. Its function is as follows. Involved in lipopolysaccharide (LPS) biosynthesis. Translocates lipid A-core from the inner to the outer leaflet of the inner membrane. Transmembrane domains (TMD) form a pore in the inner membrane and the ATP-binding domain (NBD) is responsible for energy generation. This Aromatoleum aromaticum (strain DSM 19018 / LMG 30748 / EbN1) (Azoarcus sp. (strain EbN1)) protein is ATP-dependent lipid A-core flippase.